The sequence spans 94 residues: Large ribosomal subunit protein bL28 (94 aa).

The protein belongs to the bacterial ribosomal protein bL28 family.

The protein is Large ribosomal subunit protein bL28 of Novosphingobium aromaticivorans (strain ATCC 700278 / DSM 12444 / CCUG 56034 / CIP 105152 / NBRC 16084 / F199).